Reading from the N-terminus, the 916-residue chain is RNA-directed DNA polymerase from mobile element jockey (916 aa).

The region spanning 483–757 is the Reverse transcriptase domain; the sequence is SILRVGYFPK…HEYKYLGVIL (275 aa). A disordered region spans residues 890–916; that stretch reads RSASPRSRVRRRLKRHHPQDLLDRALT. A compositionally biased stretch (basic residues) spans 896-906; the sequence is SRVRRRLKRHH. Residues 907–916 are compositionally biased toward basic and acidic residues; the sequence is PQDLLDRALT.

Requires Mg(2+) as cofactor. Mn(2+) serves as cofactor.

It catalyses the reaction DNA(n) + a 2'-deoxyribonucleoside 5'-triphosphate = DNA(n+1) + diphosphate. Inactivated by sulphydryl reagent. This chain is RNA-directed DNA polymerase from mobile element jockey (jockey\pol), found in Drosophila funebris (Fruit fly).